The primary structure comprises 253 residues: Transcription factor bHLH106 (253 aa).

Residues 66–115 (AALRNHKEAERRRRERINSHLNKLRNVLSCNSKTDKATLLAKVVQRVREL) form the bHLH domain.

As to quaternary structure, homodimer.

It localises to the nucleus. The protein is Transcription factor bHLH106 (BHLH106) of Arabidopsis thaliana (Mouse-ear cress).